Here is a 147-residue protein sequence, read N- to C-terminus: Large ribosomal subunit protein uL13 (147 aa).

This sequence belongs to the universal ribosomal protein uL13 family. Part of the 50S ribosomal subunit.

In terms of biological role, this protein is one of the early assembly proteins of the 50S ribosomal subunit, although it is not seen to bind rRNA by itself. It is important during the early stages of 50S assembly. The chain is Large ribosomal subunit protein uL13 from Pediococcus pentosaceus (strain ATCC 25745 / CCUG 21536 / LMG 10740 / 183-1w).